A 269-amino-acid chain; its full sequence is Staphylococcal secretory antigen ssaA2 (269 aa).

The N-terminal stretch at 1–27 is a signal peptide; that stretch reads MKKIATATIATAGFATIAIASGNQAHA. 7 consecutive repeat copies span residues 83-85, 88-90, 91-93, 97-99, 103-105, 106-108, and 115-117. Positions 83-115 are 7 X 3 AA repeats of Y-[NS]-N; sequence YNNYNYNNYNNGYSYNNYSRYNNYSNNNQSYNY. One can recognise a Peptidase C51 domain in the interval 148 to 269; the sequence is MAPSSNGRSI…SQAAGYNFIH (122 aa).

The protein resides in the secreted. Not known; immunogenic protein. This chain is Staphylococcal secretory antigen ssaA2 (ssaA2), found in Staphylococcus aureus (strain MSSA476).